The chain runs to 233 residues: Octanoyltransferase (233 aa).

Residues 33 to 216 (GRAQDTVILL…HLVRALSSNG (184 aa)) enclose the BPL/LPL catalytic domain. Residues 71 to 78 (RGGRITWH), 146 to 148 (AIG), and 159 to 161 (GFA) contribute to the substrate site. Cys177 (acyl-thioester intermediate) is an active-site residue.

This sequence belongs to the LipB family.

Its subcellular location is the cytoplasm. The enzyme catalyses octanoyl-[ACP] + L-lysyl-[protein] = N(6)-octanoyl-L-lysyl-[protein] + holo-[ACP] + H(+). The protein operates within protein modification; protein lipoylation via endogenous pathway; protein N(6)-(lipoyl)lysine from octanoyl-[acyl-carrier-protein]: step 1/2. In terms of biological role, catalyzes the transfer of endogenously produced octanoic acid from octanoyl-acyl-carrier-protein onto the lipoyl domains of lipoate-dependent enzymes. Lipoyl-ACP can also act as a substrate although octanoyl-ACP is likely to be the physiological substrate. This Clavibacter michiganensis subsp. michiganensis (strain NCPPB 382) protein is Octanoyltransferase.